A 161-amino-acid chain; its full sequence is 2-C-methyl-D-erythritol 2,4-cyclodiphosphate synthase (161 aa).

A divalent metal cation-binding residues include aspartate 10 and histidine 12. 4-CDP-2-C-methyl-D-erythritol 2-phosphate contacts are provided by residues 10-12 and 36-37; these read DVH and HS. Histidine 44 contacts a divalent metal cation. Residues 58 to 60, 63 to 67, 102 to 108, 134 to 137, phenylalanine 141, and arginine 144 each bind 4-CDP-2-C-methyl-D-erythritol 2-phosphate; these read DIG, FPDTD, AQAPKML, and TTTE.

It belongs to the IspF family. In terms of assembly, homotrimer. Requires a divalent metal cation as cofactor.

The enzyme catalyses 4-CDP-2-C-methyl-D-erythritol 2-phosphate = 2-C-methyl-D-erythritol 2,4-cyclic diphosphate + CMP. It functions in the pathway isoprenoid biosynthesis; isopentenyl diphosphate biosynthesis via DXP pathway; isopentenyl diphosphate from 1-deoxy-D-xylulose 5-phosphate: step 4/6. Functionally, involved in the biosynthesis of isopentenyl diphosphate (IPP) and dimethylallyl diphosphate (DMAPP), two major building blocks of isoprenoid compounds. Catalyzes the conversion of 4-diphosphocytidyl-2-C-methyl-D-erythritol 2-phosphate (CDP-ME2P) to 2-C-methyl-D-erythritol 2,4-cyclodiphosphate (ME-CPP) with a corresponding release of cytidine 5-monophosphate (CMP). The polypeptide is 2-C-methyl-D-erythritol 2,4-cyclodiphosphate synthase (Shewanella loihica (strain ATCC BAA-1088 / PV-4)).